The sequence spans 392 residues: Cytochrome P450 monooxygenase ppzE (392 aa).

Residues 10–30 (LELVWFVALYPFACWTLFAVL) form a helical membrane-spanning segment. Asparagine 319 carries an N-linked (GlcNAc...) asparagine glycan. A heme-binding site is contributed by cysteine 353. A glycan (N-linked (GlcNAc...) asparagine) is linked at asparagine 372.

This sequence belongs to the cytochrome P450 family. Requires heme as cofactor.

Its subcellular location is the membrane. Its pathway is secondary metabolite biosynthesis. Its function is as follows. Cytochrome P450 monooxygenase; part of the gene cluster that mediates the biosynthesis of pyrrolopyrazines, secondary metabolites showing insecticidal activity. The role of ppzE within the pathway has still to be determined. The single multifunctional NRPS ppzA is sufficient to produce peramine via condensation of 1-pyrroline-5-carboxylate and arginine, N-methylation of the alpha-amino group of arginine and reduction of the thioester and the cyclization to form an iminium ion resulting in release from the peptide synthetase. Deprotonation of this intermediate and oxidation of the pyrroline ring would give rise to peramine. In Epichloe species that produce only peramine, the peramine synthetase gene is not localized in a gene cluster, in contrast to Metarhizium species that contain additional pyrrolopyrazine biosynthesis genes. The 2-oxoglutarate-Fe(II) type oxidoreductase ppzC hydroxylates peramine to yield the newly identified compound 8-hydroxyperamine whereas ppzD converts L-proline into trans-4-hydroxy-L-proline, a precursor of peramine biosynthesis. The polypeptide is Cytochrome P450 monooxygenase ppzE (Metarhizium rileyi (strain RCEF 4871) (Nomuraea rileyi)).